A 342-amino-acid polypeptide reads, in one-letter code: tRNA N6-adenosine threonylcarbamoyltransferase (342 aa).

The Fe cation site is built by His115 and His119. Substrate is bound by residues 138–142 (IISGG), Asp171, Gly184, Asp188, and Asn276. Residue Asp304 coordinates Fe cation.

It belongs to the KAE1 / TsaD family. Fe(2+) serves as cofactor.

The protein resides in the cytoplasm. The enzyme catalyses L-threonylcarbamoyladenylate + adenosine(37) in tRNA = N(6)-L-threonylcarbamoyladenosine(37) in tRNA + AMP + H(+). Its function is as follows. Required for the formation of a threonylcarbamoyl group on adenosine at position 37 (t(6)A37) in tRNAs that read codons beginning with adenine. Is involved in the transfer of the threonylcarbamoyl moiety of threonylcarbamoyl-AMP (TC-AMP) to the N6 group of A37, together with TsaE and TsaB. TsaD likely plays a direct catalytic role in this reaction. This is tRNA N6-adenosine threonylcarbamoyltransferase from Endomicrobium trichonymphae.